We begin with the raw amino-acid sequence, 378 residues long: Probable G-protein coupled receptor frpr-1 (378 aa).

7 helical membrane-spanning segments follow: residues 47–67, 85–105, 120–140, 180–200, 243–263, 277–297, and 315–337; these read LVVI…GNAL, LFAL…LFFL, AVLS…SVFI, VIVC…YNSP, TIVM…AIVI, IITL…PLTV, and SNLM…GSNF.

The protein belongs to the G-protein coupled receptor 1 family.

It localises to the cell membrane. The polypeptide is Probable G-protein coupled receptor frpr-1 (Caenorhabditis elegans).